We begin with the raw amino-acid sequence, 245 residues long: MVAVSGTQRTRTVSLARWAVYAGSVFAGAWLATQLFYLAQIALWSFVNPGSTAFMRTDAWRLSRDTPPAQIRHQWVPYDQISRNLKRALIASEDSTFATNNGYDVDAILQAWEKNKARGRIVAGGSTITQQLARNLFLSREKSYIRKGQELIITWMLETVLDKERIFEIYLNSVEWGRGVYGAEAAARYYYKIPASRLGAWQSARLAVMLPKPRWFDAHRGSAYQAQRAAVIARRMGAAELPQSE.

Residues Val20–Ala42 form a helical membrane-spanning segment.

The protein belongs to the glycosyltransferase 51 family.

It localises to the cell inner membrane. The catalysed reaction is [GlcNAc-(1-&gt;4)-Mur2Ac(oyl-L-Ala-gamma-D-Glu-L-Lys-D-Ala-D-Ala)](n)-di-trans,octa-cis-undecaprenyl diphosphate + beta-D-GlcNAc-(1-&gt;4)-Mur2Ac(oyl-L-Ala-gamma-D-Glu-L-Lys-D-Ala-D-Ala)-di-trans,octa-cis-undecaprenyl diphosphate = [GlcNAc-(1-&gt;4)-Mur2Ac(oyl-L-Ala-gamma-D-Glu-L-Lys-D-Ala-D-Ala)](n+1)-di-trans,octa-cis-undecaprenyl diphosphate + di-trans,octa-cis-undecaprenyl diphosphate + H(+). It functions in the pathway cell wall biogenesis; peptidoglycan biosynthesis. Its function is as follows. Peptidoglycan polymerase that catalyzes glycan chain elongation from lipid-linked precursors. The polypeptide is Biosynthetic peptidoglycan transglycosylase (Burkholderia orbicola (strain MC0-3)).